We begin with the raw amino-acid sequence, 632 residues long: Transcription factor tazR (632 aa).

The zn(2)-C6 fungal-type DNA-binding region spans 20-47 (CNECRARKLRCDRVRPTCGTCESLGVTC). The disordered stretch occupies residues 77–130 (WNGQQKAAGGSPGESPPCSEGGQTLRAVSESTSDGVHDEDHANGARPPSSQSSI).

It is found in the nucleus. In terms of biological role, transcription factor that regulates the expression of the gene cluster that mediates the biosynthesis of azaterrilone A and other azaphilones, a class of fungal metabolites characterized by a highly oxygenated pyrano-quinone bicyclic core and exhibiting a broad range of bioactivities. The sequence is that of Transcription factor tazR from Aspergillus terreus (strain NIH 2624 / FGSC A1156).